The following is a 292-amino-acid chain: 33 kDa chaperonin (292 aa).

2 disulfides stabilise this stretch: C238–C240 and C271–C274.

This sequence belongs to the HSP33 family. Post-translationally, under oxidizing conditions two disulfide bonds are formed involving the reactive cysteines. Under reducing conditions zinc is bound to the reactive cysteines and the protein is inactive.

The protein resides in the cytoplasm. In terms of biological role, redox regulated molecular chaperone. Protects both thermally unfolding and oxidatively damaged proteins from irreversible aggregation. Plays an important role in the bacterial defense system toward oxidative stress. The chain is 33 kDa chaperonin from Latilactobacillus sakei subsp. sakei (strain 23K) (Lactobacillus sakei subsp. sakei).